A 299-amino-acid chain; its full sequence is Homoserine kinase (299 aa).

Position 85-95 (85-95) interacts with ATP; the sequence is PMSRGLGSSAT.

Belongs to the GHMP kinase family. Homoserine kinase subfamily.

The protein resides in the cytoplasm. It catalyses the reaction L-homoserine + ATP = O-phospho-L-homoserine + ADP + H(+). It participates in amino-acid biosynthesis; L-threonine biosynthesis; L-threonine from L-aspartate: step 4/5. Catalyzes the ATP-dependent phosphorylation of L-homoserine to L-homoserine phosphate. This is Homoserine kinase from Clostridium novyi (strain NT).